The chain runs to 360 residues: Phenylalanine--tRNA ligase alpha subunit (360 aa).

Glu260 contributes to the Mg(2+) binding site.

It belongs to the class-II aminoacyl-tRNA synthetase family. Phe-tRNA synthetase alpha subunit type 1 subfamily. Tetramer of two alpha and two beta subunits. Mg(2+) is required as a cofactor.

It is found in the cytoplasm. The enzyme catalyses tRNA(Phe) + L-phenylalanine + ATP = L-phenylalanyl-tRNA(Phe) + AMP + diphosphate + H(+). This Methylobacterium sp. (strain 4-46) protein is Phenylalanine--tRNA ligase alpha subunit.